A 434-amino-acid polypeptide reads, in one-letter code: Methylenetetrahydrofolate--tRNA-(uracil-5-)-methyltransferase TrmFO (434 aa).

Position 9–14 (9–14) interacts with FAD; the sequence is GAGLAG.

It belongs to the MnmG family. TrmFO subfamily. The cofactor is FAD.

It is found in the cytoplasm. The catalysed reaction is uridine(54) in tRNA + (6R)-5,10-methylene-5,6,7,8-tetrahydrofolate + NADH + H(+) = 5-methyluridine(54) in tRNA + (6S)-5,6,7,8-tetrahydrofolate + NAD(+). It carries out the reaction uridine(54) in tRNA + (6R)-5,10-methylene-5,6,7,8-tetrahydrofolate + NADPH + H(+) = 5-methyluridine(54) in tRNA + (6S)-5,6,7,8-tetrahydrofolate + NADP(+). Its function is as follows. Catalyzes the folate-dependent formation of 5-methyl-uridine at position 54 (M-5-U54) in all tRNAs. The polypeptide is Methylenetetrahydrofolate--tRNA-(uracil-5-)-methyltransferase TrmFO (Bacillus licheniformis (strain ATCC 14580 / DSM 13 / JCM 2505 / CCUG 7422 / NBRC 12200 / NCIMB 9375 / NCTC 10341 / NRRL NRS-1264 / Gibson 46)).